The primary structure comprises 373 residues: D-amino-acid oxidase 3 (373 aa).

The N-terminal stretch at 1–19 (MVKYDAVILGSGVLGLSIA) is a signal peptide. FAD-binding residues include S11, L14, D35, A46, S47, G51, and N53. Residue F57 coordinates anthranilate. A glycan (N-linked (GlcNAc...) asparagine) is linked at N180. C214 and C271 are joined by a disulfide. Y229, Y246, and R296 together coordinate anthranilate. (R)-lactate contacts are provided by Y229, Y246, and R296. FAD-binding residues include R296, G342, G345, Y346, and Q347. The Microbody targeting signal motif lies at 371–373 (AKL).

This sequence belongs to the DAMOX/DASOX family. FAD serves as cofactor.

It localises to the peroxisome matrix. It carries out the reaction a D-alpha-amino acid + O2 + H2O = a 2-oxocarboxylate + H2O2 + NH4(+). Catalyzes the oxidative deamination of D-amino acids with broad substrate specificity. Enables the organism to utilize D-amino acids as a source of nutrients. Enables the organism to utilize D-glutamate and D-methionine as a nitrogen source. Protects the organism from the toxicity of D-amino acids, including from D-glutamate. May play a role in its interaction with the host. The chain is D-amino-acid oxidase 3 from Cryptococcus neoformans var. grubii serotype A (strain H99 / ATCC 208821 / CBS 10515 / FGSC 9487) (Filobasidiella neoformans var. grubii).